Reading from the N-terminus, the 437-residue chain is Serine carboxypeptidase-like 10 (437 aa).

Residues 1 to 21 (MGSTLKHLLLLLLVLIRHVDS) form the signal peptide. Cystine bridges form between C80/C327, C243/C257, and C281/C293. N101 carries N-linked (GlcNAc...) asparagine glycosylation. S175 is an active-site residue. An N-linked (GlcNAc...) asparagine glycan is attached at N328. D362 is a catalytic residue. N378 is a glycosylation site (N-linked (GlcNAc...) asparagine). The active site involves H415. Residue N422 is glycosylated (N-linked (GlcNAc...) asparagine).

The protein belongs to the peptidase S10 family. In terms of tissue distribution, expressed in senescent leaves.

It localises to the secreted. Involved in the biosynthesis of sinapoylated anthocyanins. This is Serine carboxypeptidase-like 10 (SCPL10) from Arabidopsis thaliana (Mouse-ear cress).